Here is a 105-residue protein sequence, read N- to C-terminus: Guanidinium exporter (105 aa).

Residues 1-21 form a helical membrane-spanning segment; it reads MSWIILVIAGLLEVVWAVGLK. Over 22–28 the chain is Cytoplasmic; the sequence is YTHGFSR. A helical membrane pass occupies residues 29 to 49; it reads LTPSVITVTAMIVSLALLAWA. Topologically, residues 50–57 are periplasmic; it reads MKSLPVGT. Residues 58–78 traverse the membrane as a helical segment; sequence AYAVWTGIGAVGAAITGIVLL. Topologically, residues 79 to 81 are cytoplasmic; the sequence is GES. A helical membrane pass occupies residues 82 to 102; sequence ANPMRLASLALIVLGIIGLKL. Topologically, residues 103 to 105 are periplasmic; the sequence is STH.

Belongs to the drug/metabolite transporter (DMT) superfamily. Small multidrug resistance (SMR) (TC 2.A.7.1) family. Gdx/SugE subfamily.

Its subcellular location is the cell inner membrane. In terms of biological role, guanidinium ion exporter. Couples guanidinium export to the proton motive force, exchanging one guanidinium ion for two protons. This is Guanidinium exporter from Escherichia coli O6:H1 (strain CFT073 / ATCC 700928 / UPEC).